The primary structure comprises 278 residues: Putative carbamate hydrolase RutD (278 aa).

It belongs to the AB hydrolase superfamily. Hydrolase RutD family.

The enzyme catalyses carbamate + 2 H(+) = NH4(+) + CO2. Its function is as follows. Involved in pyrimidine catabolism. May facilitate the hydrolysis of carbamate, a reaction that can also occur spontaneously. In Yersinia enterocolitica serotype O:8 / biotype 1B (strain NCTC 13174 / 8081), this protein is Putative carbamate hydrolase RutD.